The following is a 129-amino-acid chain: Small ribosomal subunit protein uS11 (129 aa).

Belongs to the universal ribosomal protein uS11 family. Part of the 30S ribosomal subunit. Interacts with proteins S7 and S18. Binds to IF-3.

Functionally, located on the platform of the 30S subunit, it bridges several disparate RNA helices of the 16S rRNA. Forms part of the Shine-Dalgarno cleft in the 70S ribosome. The protein is Small ribosomal subunit protein uS11 of Hyphomonas neptunium (strain ATCC 15444).